A 670-amino-acid chain; its full sequence is Acetyl-coenzyme A synthetase (670 aa).

Residues 205–208 (RRGK) and T326 each bind CoA. Residues 402 to 404 (GEP), 426 to 431 (STWWMT), D517, R532, and R543 each bind ATP. Mg(2+) is bound by residues V554, H556, and V559. R601 serves as a coordination point for CoA. The residue at position 626 (K626) is an N6-acetyllysine.

The protein belongs to the ATP-dependent AMP-binding enzyme family. The cofactor is Mg(2+). Acetylated. Deacetylation by the SIR2-homolog deacetylase activates the enzyme.

The catalysed reaction is acetate + ATP + CoA = acetyl-CoA + AMP + diphosphate. Catalyzes the conversion of acetate into acetyl-CoA (AcCoA), an essential intermediate at the junction of anabolic and catabolic pathways. AcsA undergoes a two-step reaction. In the first half reaction, AcsA combines acetate with ATP to form acetyl-adenylate (AcAMP) intermediate. In the second half reaction, it can then transfer the acetyl group from AcAMP to the sulfhydryl group of CoA, forming the product AcCoA. The chain is Acetyl-coenzyme A synthetase from Pyrobaculum arsenaticum (strain DSM 13514 / JCM 11321 / PZ6).